Here is a 607-residue protein sequence, read N- to C-terminus: ATP-dependent RNA helicase DBP6 (607 aa).

The tract at residues 1 to 83 (MFAARFDPSR…GTGEADKRHQ (83 aa)) is disordered. A compositionally biased stretch (acidic residues) spans 34 to 59 (QDESESEMSSAESEDEAMQLDDEEEV). The segment covering 60-69 (VDSKGKENHG) has biased composition (basic and acidic residues). The Q motif motif lies at 184–192 (AFPIQTALL). The Helicase ATP-binding domain occupies 208-388 (RYYTRKVGDI…DLQLHNPKLF (181 aa)). 221–228 (ASTGSGKT) provides a ligand contact to ATP. The DEAD box motif lies at 328-331 (DEAD). In terms of domain architecture, Helicase C-terminal spans 419–578 (ILLRLLPLLS…GSHLFFDEEQ (160 aa)).

This sequence belongs to the DEAD box helicase family. DDX51/DBP6 subfamily. Associated with pre-ribosomal particles.

Its subcellular location is the nucleus. It localises to the nucleolus. It carries out the reaction ATP + H2O = ADP + phosphate + H(+). Its function is as follows. ATP-binding RNA helicase involved in the biogenesis of 60S ribosomal subunits and is required for the normal formation of 25S and 5.8S rRNAs. This is ATP-dependent RNA helicase DBP6 (DBP6) from Eremothecium gossypii (strain ATCC 10895 / CBS 109.51 / FGSC 9923 / NRRL Y-1056) (Yeast).